A 214-amino-acid polypeptide reads, in one-letter code: Small ribosomal subunit protein uS3 (214 aa).

A KH type-2 domain is found at 39–107; that stretch reads IRAYLLKKPA…EVWVAVEEVK (69 aa).

This sequence belongs to the universal ribosomal protein uS3 family. As to quaternary structure, part of the 30S ribosomal subunit. Forms a tight complex with proteins S10 and S14.

Binds the lower part of the 30S subunit head. Binds mRNA in the 70S ribosome, positioning it for translation. This is Small ribosomal subunit protein uS3 from Protochlamydia amoebophila (strain UWE25).